The primary structure comprises 91 residues: Large ribosomal subunit protein uL23 (91 aa).

It belongs to the universal ribosomal protein uL23 family. Part of the 50S ribosomal subunit. Contacts protein L29, and trigger factor when it is bound to the ribosome.

One of the early assembly proteins it binds 23S rRNA. One of the proteins that surrounds the polypeptide exit tunnel on the outside of the ribosome. Forms the main docking site for trigger factor binding to the ribosome. The protein is Large ribosomal subunit protein uL23 of Staphylococcus epidermidis (strain ATCC 35984 / DSM 28319 / BCRC 17069 / CCUG 31568 / BM 3577 / RP62A).